The sequence spans 252 residues: Short-chain dehydrogenase anuI (252 aa).

L18, D65, N92, Y171, K175, and T206 together coordinate NADP(+). Catalysis depends on Y171, which acts as the Proton acceptor. Y171 functions as the Proton donor in the catalytic mechanism. K175 (lowers pKa of active site Tyr) is an active-site residue.

Belongs to the short-chain dehydrogenases/reductases (SDR) family.

Highly reducing polyketide synthase; part of the gene cluster that mediates the biosynthesis of annullatin D, an alkylated aromatic polyketide with a fused dihydrobenzofuran lactone ring system that exhibits potent agonistic activities toward the cannabinoid receptors. AnuI does not seem to play a role within the pathway. The annullatin backbone 2-hydroxymethyl-3-pentylphenol is assembled from one acetyl-CoA starter unit and 5 malonyl-CoA elongation units by cooperation of the highly reducing polyketide synthase anuA, the short-chain dehydrogenase anuB and the oxidoreductase anuC, before being hydroxylated at the C-5 alkyl chain by the cytochrome P450 monooxygenase anuE to form (8S)-annullatin E. The prenyltransferase anuH subsequently installs one isoprenyl group at the benzene ring to form (8S)-annullatin J. Enzymatic or nonenzymatic dihydro-benzofuran ring formation between the prenyl and the phenolic hydroxyl groups in (8S)-annullatin J results in two diastereomers (2S,9S)-annullatin H and compound 12. The intermediate (2S,9S)-annullatin H is then converted to (2S,9S)-annullatin D by the FAD-linked oxidoreductase anuG-catalyzed five-member lactone ring formation. The isomer 12 acts as a substrate for the short-chain dehydrogenase anuF and is oxidized to (2R)-annullatin F, which is subsequently acetylated by an acetyltransferase leading to (2R)-annullatin G formation. The remaining enzymes identified within the cluster, anuD, anuI and anuJ, seem not to be involved in annullatin biosynthesis. This chain is Short-chain dehydrogenase anuI, found in Penicillium roqueforti (strain FM164).